The following is a 65-amino-acid chain: Large ribosomal subunit protein bL35 (65 aa).

A disordered region spans residues 1–26 (MPKMKTHRGAAKRFKKTGSGKLKRAK).

This sequence belongs to the bacterial ribosomal protein bL35 family.

This Clostridium novyi (strain NT) protein is Large ribosomal subunit protein bL35.